Reading from the N-terminus, the 86-residue chain is EMBRYO SURROUNDING FACTOR 1-like protein 2 (86 aa).

The signal sequence occupies residues 1-21 (MKSHIAIICIIMLSFFSMHEY). 4 disulfide bridges follow: Cys-39-Cys-54, Cys-44-Cys-82, Cys-52-Cys-78, and Cys-55-Cys-65.

This sequence belongs to the MEG family.

In Arabidopsis thaliana (Mouse-ear cress), this protein is EMBRYO SURROUNDING FACTOR 1-like protein 2 (ESFL2).